A 524-amino-acid chain; its full sequence is GMP synthase [glutamine-hydrolyzing] (524 aa).

A Glutamine amidotransferase type-1 domain is found at 7–196 (PVLVVDFGAQ…LHELAGIPAS (190 aa)). The Nucleophile role is filled by Cys-84. Catalysis depends on residues His-170 and Glu-172. In terms of domain architecture, GMPS ATP-PPase spans 197–398 (WTPSNIADVL…LGLPEEIVAR (202 aa)). 224–230 (SGGVDSA) is a binding site for ATP.

As to quaternary structure, homodimer.

It catalyses the reaction XMP + L-glutamine + ATP + H2O = GMP + L-glutamate + AMP + diphosphate + 2 H(+). The protein operates within purine metabolism; GMP biosynthesis; GMP from XMP (L-Gln route): step 1/1. In terms of biological role, catalyzes the synthesis of GMP from XMP. This chain is GMP synthase [glutamine-hydrolyzing], found in Nocardia farcinica (strain IFM 10152).